The primary structure comprises 1530 residues: Neurexin-1 (1530 aa).

Residues 1-30 (MGTALLQRGGCFLLCLSLLLLGCWAELGSG) form the signal peptide. Residues 31–212 (LEFPGAEGQW…KLDDEPPNSG (182 aa)) form the Laminin G-like 1 domain. The Extracellular portion of the chain corresponds to 31–1454 (LEFPGAEGQW…EVIRESSSTT (1424 aa)). Asn-125 and Asn-190 each carry an N-linked (GlcNAc...) asparagine glycan. The segment at 199–221 (SGEVKLDDEPPNSGGGSPCEAGE) is disordered. The region spanning 213-256 (GGSPCEAGEEGEGGVCLNGGVCSVVDDQAVCDCSRTGFRGKDCS) is the EGF-like 1 domain. 2 cysteine pairs are disulfide-bonded: Cys-228–Cys-243 and Cys-245–Cys-255. Laminin G-like domains lie at 299–496 (IATF…AFKC) and 503–695 (DPIT…KPSC). Asp-345, Leu-362, and Met-430 together coordinate Ca(2+). Cystine bridges form between Cys-460–Cys-496, Cys-666–Cys-695, Cys-703–Cys-714, Cys-708–Cys-723, and Cys-725–Cys-735. The 38-residue stretch at 699–736 (TAKPCLSNPCKNNGMCRDGWNRYVCDCSGTGYLGRSCE) folds into the EGF-like 2 domain. Residue Ser-705 is glycosylated (O-linked (Glc...) serine). Laminin G-like domains follow at residues 741-914 (VLSY…IDYC) and 928-1103 (DPVT…ERGC). Ca(2+) is bound by residues Asp-788 and Leu-805. Asn-813 carries an N-linked (GlcNAc...) asparagine glycan. Residue Arg-864 participates in Ca(2+) binding. Disulfide bonds link Cys-906–Cys-914, Cys-1075–Cys-1103, Cys-1110–Cys-1121, Cys-1115–Cys-1130, and Cys-1132–Cys-1142. The 38-residue stretch at 1106-1143 (PSTTCQEDSCSNQGVCLQQWDGISCDCSMTSFSGPLCN) folds into the EGF-like 3 domain. Positions 1149–1347 (YIFSKGGGQI…DANIAIVGNV (199 aa)) constitute a Laminin G-like 6 domain. Asp-1199 and Val-1216 together coordinate Ca(2+). Residue Asn-1246 is glycosylated (N-linked (GlcNAc...) asparagine). Positions 1298 and 1300 each coordinate Ca(2+). Residue Ser-1408 is glycosylated (O-linked (Xyl...) (heparan sulfate) serine). Positions 1411–1443 (CPSDDEDIDPCEPSSGGLANPTRAGGREPYPGS) are disordered. A helical transmembrane segment spans residues 1455 to 1475 (GMVVGIVAAAALCILILLYAM). Over 1476 to 1530 (YKYRNRDEGSYHVDESRNYISNSAQSNGAVVKEKQPSSAKSANKNKKNKDKEYYV) the chain is Cytoplasmic. The interval 1497–1523 (NSAQSNGAVVKEKQPSSAKSANKNKKN) is interaction with CASK. The interval 1497–1530 (NSAQSNGAVVKEKQPSSAKSANKNKKNKDKEYYV) is disordered.

It belongs to the neurexin family. In terms of assembly, interacts (via laminin G-like domain 2 and/or laminin G-like domain 6) with NLGN1 forming a heterotetramer, where one NLGN1 dimer interacts with one NRXN1 dimer. Also interacts (via laminin G-like domain 2 and/or laminin G-like domain 6) with NLGN2, NLGN3 and NLGN4L; interactions with NLGN1, NLGN2, NLGN3 and NLGN4L are calcium-dependent. Interacts (via cytoplasmic C-terminal region) with CASK (via the PDZ, SH3 and guanylate kinase-like domains). Interacts (via cytoplasmic C-terminus) with CASKIN1 and APBA1. Interacts (via laminin G-like domain 2) with NXPH1 and NXPH3. Alpha-type isoforms (neurexin-1-alpha) interact (via laminin G-like domain 2 and/or laminin G-like domain 6) with DAG1 (via alpha-dystroglycan chain). Interacts with LRRTM1, LRRTM2, LRRTM3 and LRRTM4. Interacts with SYT13 and SYTL1. Interacts with CBLN1, CBLN2 and, less avidly, with CBLN4. Interacts with CLSTN3. Alpha-type isoforms interact with alpha-latrotoxin from spider venom. In terms of processing, O-glycosylated; contains heparan sulfate. Heparan sulfate attachment is required for synapse development by mediating interactions with neuroligins and LRRTM2.

It is found in the presynaptic cell membrane. In terms of biological role, cell surface protein involved in cell-cell-interactions, exocytosis of secretory granules and regulation of signal transmission. Function is isoform-specific. Alpha-type isoforms have a long N-terminus with six laminin G-like domains and play an important role in synaptic signal transmission. Alpha-type isoforms play a role in the regulation of calcium channel activity and Ca(2+)-triggered neurotransmitter release at synapses and at neuromuscular junctions. They play an important role in Ca(2+)-triggered exocytosis of secretory granules in pituitary gland. They may affect their functions at synapses and in endocrine cells via their interactions with proteins from the exocytotic machinery. Likewise, alpha-type isoforms play a role in regulating the activity of postsynaptic NMDA receptors, a subtype of glutamate-gated ion channels. Both alpha-type and beta-type isoforms may play a role in the formation or maintenance of synaptic junctions via their interactions (via the extracellular domains) with neuroligin family members, CBLN1 or CBLN2. In vitro, triggers the de novo formation of presynaptic structures. May be involved in specification of excitatory synapses. Alpha-type isoforms were first identified as receptors for alpha-latrotoxin from spider venom. The polypeptide is Neurexin-1 (NRXN1) (Bos taurus (Bovine)).